A 178-amino-acid polypeptide reads, in one-letter code: Adenine phosphoribosyltransferase (178 aa).

Belongs to the purine/pyrimidine phosphoribosyltransferase family. As to quaternary structure, homodimer.

It localises to the cytoplasm. It catalyses the reaction AMP + diphosphate = 5-phospho-alpha-D-ribose 1-diphosphate + adenine. It participates in purine metabolism; AMP biosynthesis via salvage pathway; AMP from adenine: step 1/1. Catalyzes a salvage reaction resulting in the formation of AMP, that is energically less costly than de novo synthesis. The protein is Adenine phosphoribosyltransferase of Helicobacter hepaticus (strain ATCC 51449 / 3B1).